The primary structure comprises 91 residues: Small ribosomal subunit protein uS19 (91 aa).

The protein belongs to the universal ribosomal protein uS19 family.

Its function is as follows. Protein S19 forms a complex with S13 that binds strongly to the 16S ribosomal RNA. The protein is Small ribosomal subunit protein uS19 of Synechococcus sp. (strain CC9902).